Consider the following 181-residue polypeptide: MGIPVGKSLLMLFTFLAFASCCIAAYRPSETLCGGELVDTLQFVCGDRGFYFSRPASRINRRSRGIVEECCFRSCDLALLETYCATPAKSERDVSTPPTVLPDDSPRYPVVKLFQYNAWKQSTQRLRRGLPALLRTRRGRMLVKELEAFREAQRHRPLIALPTEDPTPHGAAFVEVSSDLQ.

Positions 1–24 are cleaved as a signal peptide; that stretch reads MGIPVGKSLLMLFTFLAFASCCIA. Positions 25–52 are b; the sequence is AYRPSETLCGGELVDTLQFVCGDRGFYF. Intrachain disulfides connect Cys33-Cys71, Cys45-Cys84, and Cys70-Cys75. Positions 53–64 are c; the sequence is SRPASRINRRSR. The segment at 65 to 85 is a; it reads GIVEECCFRSCDLALLETYCA. The d stretch occupies residues 86-91; that stretch reads TPAKSE. Residues 92 to 181 constitute a propeptide, e peptide; the sequence is RDVSTPPTVL…AFVEVSSDLQ (90 aa). Residue Thr163 is glycosylated (O-linked (GalNAc...) threonine).

The protein belongs to the insulin family. As to quaternary structure, interacts with MYORG; this interaction is required for IGF2 secretion. Interacts with integrins ITGAV:ITGB3 and ITGA6:ITGB4; integrin-binding is required for IGF2 signaling. Interacts with IGFBP2. Proteolytically processed by PCSK4, proIGF2 is cleaved at Arg-128 and Arg-92 to generate big-IGF2 and mature IGF2.

The protein resides in the secreted. In terms of biological role, the insulin-like growth factors possess growth-promoting activity. Major fetal growth hormone in mammals. Plays a key role in regulating fetoplacental development. IGF2 is influenced by placental lactogen. Also involved in tissue differentiation. In adults, involved in glucose metabolism in adipose tissue, skeletal muscle and liver. Acts as a ligand for integrin which is required for IGF2 signaling. Positively regulates myogenic transcription factor MYOD1 function by facilitating the recruitment of transcriptional coactivators, thereby controlling muscle terminal differentiation. Inhibits myoblast differentiation and modulates metabolism via increasing the mitochondrial respiration rate. Functionally, preptin undergoes glucose-mediated co-secretion with insulin, and acts as a physiological amplifier of glucose-mediated insulin secretion. Exhibits osteogenic properties by increasing osteoblast mitogenic activity through phosphoactivation of MAPK1 and MAPK3. This Equus caballus (Horse) protein is Insulin-like growth factor 2.